A 593-amino-acid polypeptide reads, in one-letter code: Transmembrane 9 superfamily member 4 (593 aa).

A signal peptide spans 1–25; the sequence is MVLLPSMTSLLLVFLFLYGVSPVIS. At 26-230 the chain is on the lumenal side; the sequence is DGSDHRYKVG…SMPHHLEIHW (205 aa). Residues 231-251 form a helical membrane-spanning segment; sequence FSIINSCVTVLLLTGFLATIL. Residues 252–303 are Cytoplasmic-facing; that stretch reads MRVLKNDFVKYAHDEEAVDDQEETGWKLIHGDVFRFPKHKSLLAAALGSGTQ. The chain crosses the membrane as a helical span at residues 304–324; sequence LFTLAVFIFMLALVGVFYPYN. Over 325-326 the chain is Lumenal; the sequence is RG. A helical membrane pass occupies residues 327–347; it reads ALFTALVVIYALTSGIAGYTA. Residues 348–366 are Cytoplasmic-facing; sequence ASFYCQLEGTNWVRNVILT. The helical transmembrane segment at 367–387 threads the bilayer; that stretch reads GSLFCGPLLITFSFLNTVAIA. Topologically, residues 388-398 are lumenal; that stretch reads YQATAALPFGT. Residues 399-419 form a helical membrane-spanning segment; the sequence is IVVIFLIWALVTSPLLILGGI. At 420–453 the chain is on the cytoplasmic side; sequence AGKNRKSEFQAPCRTTKYPREIPPMRWYRRTLPQ. A helical transmembrane segment spans residues 454-474; that stretch reads MAMAGFLPFSAIYIELYYIFA. At 475–486 the chain is on the lumenal side; it reads SVWGHRIYTIYS. Residues 487–507 form a helical membrane-spanning segment; sequence ILSIVFLILVIVTAFITVALT. The Cytoplasmic portion of the chain corresponds to 508–522; it reads YFQLAAEDHEWWWRS. Residues 523 to 543 traverse the membrane as a helical segment; that stretch reads LLCGGSTGLFIYAYCLYYYYA. Topologically, residues 544-554 are lumenal; that stretch reads RSDMSGFMQTS. A helical membrane pass occupies residues 555 to 575; it reads FFFGYMACICYGFFLMLGTIG. The Cytoplasmic segment spans residues 576 to 593; the sequence is FCASLLFVRHIYRSIKCE. An Endoplasmic reticulum export signal motif is present at residues 582-587; it reads FVRHIY. Positions 591 to 593 match the Golgi retention signal motif; that stretch reads KCE.

This sequence belongs to the nonaspanin (TM9SF) (TC 9.A.2) family.

The protein localises to the endosome membrane. The protein resides in the golgi apparatus membrane. The protein is Transmembrane 9 superfamily member 4 of Arabidopsis thaliana (Mouse-ear cress).